Here is a 98-residue protein sequence, read N- to C-terminus: C-X-C motif chemokine 10 (98 aa).

Positions Met1–Gly21 are cleaved as a signal peptide. Citrulline is present on Arg26. 2 cysteine pairs are disulfide-bonded: Cys30–Cys57 and Cys32–Cys74.

It belongs to the intercrine alpha (chemokine CxC) family. In terms of assembly, monomer, dimer, and tetramer. Interacts with CXCR3 (via N-terminus). In terms of tissue distribution, in the central nervous system, CXCL10 is predominantly localized to activated neurons. Expressed in both microglia and astrocytes.

Its subcellular location is the secreted. Pro-inflammatory cytokine that is involved in a wide variety of processes such as chemotaxis, differentiation, and activation of peripheral immune cells, regulation of cell growth, apoptosis and modulation of angiostatic effects. Plays thereby an important role during viral infections by stimulating the activation and migration of immune cells to the infected sites. Mechanistically, binding of CXCL10 to the CXCR3 receptor activates G protein-mediated signaling and results in downstream activation of phospholipase C-dependent pathway, an increase in intracellular calcium production and actin reorganization. In turn, recruitment of activated Th1 lymphocytes occurs at sites of inflammation. Activation of the CXCL10/CXCR3 axis also plays an important role in neurons in response to brain injury for activating microglia, the resident macrophage population of the central nervous system, and directing them to the lesion site. This recruitment is an essential element for neuronal reorganization. The sequence is that of C-X-C motif chemokine 10 (Cxcl10) from Rattus norvegicus (Rat).